Consider the following 256-residue polypeptide: Small ribosomal subunit protein uS2 (256 aa).

Belongs to the universal ribosomal protein uS2 family.

In Methylococcus capsulatus (strain ATCC 33009 / NCIMB 11132 / Bath), this protein is Small ribosomal subunit protein uS2.